Consider the following 186-residue polypeptide: Putative 3-methyladenine DNA glycosylase (186 aa).

This sequence belongs to the DNA glycosylase MPG family.

This Borrelia garinii subsp. bavariensis (strain ATCC BAA-2496 / DSM 23469 / PBi) (Borreliella bavariensis) protein is Putative 3-methyladenine DNA glycosylase.